We begin with the raw amino-acid sequence, 121 residues long: Flagellar protein FliT (121 aa).

A required for homodimerization region spans residues 1-50 (MNNAPHLYFAWQQLVEKSQLMLRLATEEQWDELIASEMAYVNAVQEIAHL). Residues 60-98 (MQEQLRPMLHLILDNESKVKQLLQIRMDELAKLVGQSSV) form a fliD binding region.

It belongs to the FliT family. In terms of assembly, homodimer. Interacts with FliD and FlhC.

It is found in the cytoplasm. Its subcellular location is the cytosol. In terms of biological role, dual-function protein that regulates the transcription of class 2 flagellar operons and that also acts as an export chaperone for the filament-capping protein FliD. As a transcriptional regulator, acts as an anti-FlhDC factor; it directly binds FlhC, thus inhibiting the binding of the FlhC/FlhD complex to class 2 promoters, resulting in decreased expression of class 2 flagellar operons. As a chaperone, effects FliD transition to the membrane by preventing its premature polymerization, and by directing it to the export apparatus. This chain is Flagellar protein FliT, found in Escherichia coli O17:K52:H18 (strain UMN026 / ExPEC).